The sequence spans 108 residues: Peptidyl-prolyl cis-trans isomerase FKBP1C (108 aa).

The 89-residue stretch at 20 to 108 folds into the PPIase FKBP-type domain; it reads SQTCVMHYTG…VFDVELLKLE (89 aa).

It belongs to the FKBP-type PPIase family. FKBP1 subfamily.

It carries out the reaction [protein]-peptidylproline (omega=180) = [protein]-peptidylproline (omega=0). Catalyzes the cis-trans isomerization of proline imidic peptide bonds in oligopeptides. This Homo sapiens (Human) protein is Peptidyl-prolyl cis-trans isomerase FKBP1C.